A 178-amino-acid polypeptide reads, in one-letter code: Protein GrpE (178 aa).

The protein belongs to the GrpE family. Homodimer.

It is found in the cytoplasm. In terms of biological role, participates actively in the response to hyperosmotic and heat shock by preventing the aggregation of stress-denatured proteins, in association with DnaK and GrpE. It is the nucleotide exchange factor for DnaK and may function as a thermosensor. Unfolded proteins bind initially to DnaJ; upon interaction with the DnaJ-bound protein, DnaK hydrolyzes its bound ATP, resulting in the formation of a stable complex. GrpE releases ADP from DnaK; ATP binding to DnaK triggers the release of the substrate protein, thus completing the reaction cycle. Several rounds of ATP-dependent interactions between DnaJ, DnaK and GrpE are required for fully efficient folding. In Bordetella avium (strain 197N), this protein is Protein GrpE.